A 139-amino-acid polypeptide reads, in one-letter code: Ribonuclease P protein component (139 aa).

The protein belongs to the RnpA family. Consists of a catalytic RNA component (M1 or rnpB) and a protein subunit.

The enzyme catalyses Endonucleolytic cleavage of RNA, removing 5'-extranucleotides from tRNA precursor.. Its function is as follows. RNaseP catalyzes the removal of the 5'-leader sequence from pre-tRNA to produce the mature 5'-terminus. It can also cleave other RNA substrates such as 4.5S RNA. The protein component plays an auxiliary but essential role in vivo by binding to the 5'-leader sequence and broadening the substrate specificity of the ribozyme. This is Ribonuclease P protein component from Paraburkholderia xenovorans (strain LB400).